We begin with the raw amino-acid sequence, 109 residues long: Thioredoxin (109 aa).

Residues 2 to 109 (TNCIVELTDG…LKDFLNLYLK (108 aa)) enclose the Thioredoxin domain. C33 and C36 are disulfide-bonded.

It belongs to the thioredoxin family.

Participates in various redox reactions through the reversible oxidation of its active center dithiol to a disulfide and catalyzes dithiol-disulfide exchange reactions. This chain is Thioredoxin (trxA), found in Buchnera aphidicola subsp. Baizongia pistaciae (strain Bp).